Here is a 569-residue protein sequence, read N- to C-terminus: Vacuolar protein sorting-associated protein 45 homolog (569 aa).

This sequence belongs to the STXBP/unc-18/SEC1 family. In terms of assembly, interacts with both SYP41 or SYP42 and VTI12, but in different domains of the trans-Golgi network. Does not interact on the pervacuolar compartment with VTI11, SYP21 or SYP22, or on the cis-Golgi with SYP31. Interacts at the trans-Golgi network (TGN) with the SYP41/SYP61/VTI12 SNARE complex. Highly expressed in roots, lower expression in leaves, stems and flowers.

The protein localises to the golgi apparatus. Its subcellular location is the trans-Golgi network membrane. The protein resides in the early endosome. In terms of biological role, involved in the protein transport to the vacuole, probably at the level of vesicle fusion at the trans-Golgi network (TGN) and not in transport from the TGN to the prevacuolar compartment, by promoting the recycling of vacuolar sorting receptors back to the TGN. Involved in early endosomal vesicle trafficking, particularly at the trans-Golgi-network/early endosome (TGN/EE) thus residing in early endocytic route. Together with BIG5/BEN1 required for polar PIN-FORMED (PIN) proteins localization, for their dynamic repolarization, and consequently for auxin activity gradient formation and auxin-related developmental processes (e.g. embryonic patterning, organogenesis and vasculature venation patterning). Necessary for pollen germination and for cell expansion. Binds syntaxins. This is Vacuolar protein sorting-associated protein 45 homolog from Arabidopsis thaliana (Mouse-ear cress).